Here is a 181-residue protein sequence, read N- to C-terminus: ATP-dependent protease subunit HslV (181 aa).

Residue Thr7 is part of the active site. 3 residues coordinate Na(+): Gly166, Cys169, and Thr172.

Belongs to the peptidase T1B family. HslV subfamily. In terms of assembly, a double ring-shaped homohexamer of HslV is capped on each side by a ring-shaped HslU homohexamer. The assembly of the HslU/HslV complex is dependent on binding of ATP.

It is found in the cytoplasm. It carries out the reaction ATP-dependent cleavage of peptide bonds with broad specificity.. Its activity is regulated as follows. Allosterically activated by HslU binding. Protease subunit of a proteasome-like degradation complex believed to be a general protein degrading machinery. The polypeptide is ATP-dependent protease subunit HslV (Acidovorax ebreus (strain TPSY) (Diaphorobacter sp. (strain TPSY))).